A 444-amino-acid polypeptide reads, in one-letter code: L-seryl-tRNA(Sec) selenium transferase (444 aa).

Lys284 carries the N6-(pyridoxal phosphate)lysine modification.

This sequence belongs to the SelA family. Requires pyridoxal 5'-phosphate as cofactor.

The protein localises to the cytoplasm. It catalyses the reaction L-seryl-tRNA(Sec) + selenophosphate + H(+) = L-selenocysteinyl-tRNA(Sec) + phosphate. Its pathway is aminoacyl-tRNA biosynthesis; selenocysteinyl-tRNA(Sec) biosynthesis; selenocysteinyl-tRNA(Sec) from L-seryl-tRNA(Sec) (bacterial route): step 1/1. Its function is as follows. Converts seryl-tRNA(Sec) to selenocysteinyl-tRNA(Sec) required for selenoprotein biosynthesis. The polypeptide is L-seryl-tRNA(Sec) selenium transferase (Wolinella succinogenes (strain ATCC 29543 / DSM 1740 / CCUG 13145 / JCM 31913 / LMG 7466 / NCTC 11488 / FDC 602W) (Vibrio succinogenes)).